A 581-amino-acid chain; its full sequence is ATP-dependent lipid A-core flippase (581 aa).

Transmembrane regions (helical) follow at residues 21 to 41 (TVAI…ALFI), 65 to 85 (FVVI…SYCL), 138 to 158 (ALLI…VMFY), 161 to 181 (WQLS…VTVV), 246 to 266 (LSVS…LWVV), and 271 to 291 (MIDT…MMLL). Residues 24 to 306 (IVAIIGMIGY…LANVNSDMQR (283 aa)) form the ABC transmembrane type-1 domain. Positions 338–575 (IEVKNVTFKY…NGTYSALCKM (238 aa)) constitute an ABC transporter domain. Residue 372–379 (GRSGSGKS) participates in ATP binding.

It belongs to the ABC transporter superfamily. Lipid exporter (TC 3.A.1.106) family. In terms of assembly, homodimer.

It localises to the cell inner membrane. It catalyses the reaction ATP + H2O + lipid A-core oligosaccharideSide 1 = ADP + phosphate + lipid A-core oligosaccharideSide 2.. Functionally, involved in lipopolysaccharide (LPS) biosynthesis. Translocates lipid A-core from the inner to the outer leaflet of the inner membrane. Transmembrane domains (TMD) form a pore in the inner membrane and the ATP-binding domain (NBD) is responsible for energy generation. This Pseudoalteromonas translucida (strain TAC 125) protein is ATP-dependent lipid A-core flippase.